We begin with the raw amino-acid sequence, 293 residues long: Small ribosomal subunit biogenesis GTPase RsgA (293 aa).

A CP-type G domain is found at 63–223 (QNELVRPPVA…VADTPGFSAL (161 aa)). Residues 112-115 (SKID) and 166-174 (GQSGVGKSS) each bind GTP. 4 residues coordinate Zn(2+): cysteine 247, cysteine 252, histidine 254, and cysteine 260.

The protein belongs to the TRAFAC class YlqF/YawG GTPase family. RsgA subfamily. Monomer. Associates with 30S ribosomal subunit, binds 16S rRNA. The cofactor is Zn(2+).

The protein localises to the cytoplasm. Functionally, one of several proteins that assist in the late maturation steps of the functional core of the 30S ribosomal subunit. Helps release RbfA from mature subunits. May play a role in the assembly of ribosomal proteins into the subunit. Circularly permuted GTPase that catalyzes slow GTP hydrolysis, GTPase activity is stimulated by the 30S ribosomal subunit. The sequence is that of Small ribosomal subunit biogenesis GTPase RsgA from Geobacillus thermodenitrificans (strain NG80-2).